A 1029-amino-acid polypeptide reads, in one-letter code: Kinesin-like protein KIF17 (1029 aa).

Residues 5 to 335 (AVKVVVRCRP…LRYANRAKNI (331 aa)) form the Kinesin motor domain. 91–98 (GQTGSGKS) contacts ATP. Residues 346–462 (KDALLREYQE…EENLRKETEA (117 aa)) are a coiled coil. Disordered stretches follow at residues 523–569 (ELPK…MPTE) and 647–673 (VPAP…PPRP). Over residues 532–551 (SEISLGSSESSSLEETSVSE) the composition is skewed to low complexity. The segment covering 657 to 673 (SDARPEAEAADDFPPRP) has biased composition (basic and acidic residues). Positions 739–846 (QQVLARLQLL…QLEKIDYLAT (108 aa)) form a coiled coil. Disordered regions lie at residues 908-931 (AVST…EPNM) and 968-1029 (KSLT…SEPL).

This sequence belongs to the TRAFAC class myosin-kinesin ATPase superfamily. Kinesin family. In terms of assembly, homodimer. Interacts with APBA1 (via PDZ domain); the interaction is direct and is required for association of KIF17 with the cargo that is to be transported. Interacts with IFT B complex components IFT52 and IFT57. Interacts with IFT70B. Interacts with PIWIL1. Interacts with TBATA.

It localises to the cytoplasm. The protein localises to the cytoskeleton. It is found in the cell projection. Its subcellular location is the cilium. The protein resides in the dendrite. Its function is as follows. Dendrite-specific motor protein which, in association with the Apba1-containing complex (LIN-10-LIN-2-LIN-7 complex), transports vesicles containing N-methyl-D-aspartate (NMDA) receptor subunit NR2B along microtubules. The protein is Kinesin-like protein KIF17 (KIF17) of Homo sapiens (Human).